We begin with the raw amino-acid sequence, 101 residues long: Small ribosomal subunit protein uS14 (101 aa).

Belongs to the universal ribosomal protein uS14 family. As to quaternary structure, part of the 30S ribosomal subunit. Contacts proteins S3 and S10.

Binds 16S rRNA, required for the assembly of 30S particles and may also be responsible for determining the conformation of the 16S rRNA at the A site. This chain is Small ribosomal subunit protein uS14, found in Shewanella baltica (strain OS155 / ATCC BAA-1091).